Reading from the N-terminus, the 78-residue chain is MFGRIGLPEILLILAIALIIFGPKKLPELGKALGSSLREFKSATKELREEVNEVEEEVKENKSSDVKENEDNKTEKST.

A helical membrane pass occupies residues 1–21 (MFGRIGLPEILLILAIALIIF). Residues 50–78 (EVNEVEEEVKENKSSDVKENEDNKTEKST) form a disordered region. Residues 59–78 (KENKSSDVKENEDNKTEKST) show a composition bias toward basic and acidic residues.

Belongs to the TatA/E family. Forms a complex with TatC.

Its subcellular location is the cell membrane. Its function is as follows. Part of the twin-arginine translocation (Tat) system that transports large folded proteins containing a characteristic twin-arginine motif in their signal peptide across membranes. TatA could form the protein-conducting channel of the Tat system. The polypeptide is Sec-independent protein translocase protein TatA (Natranaerobius thermophilus (strain ATCC BAA-1301 / DSM 18059 / JW/NM-WN-LF)).